The following is a 79-amino-acid chain: Defensin-like protein 3 (79 aa).

The first 29 residues, 1 to 29 (MAKFASIITLLFAALVVFAAFEAPTMVEA), serve as a signal peptide directing secretion. 4 cysteine pairs are disulfide-bonded: C32–C79, C43–C64, C49–C73, and C53–C75.

The protein belongs to the DEFL family.

The protein resides in the secreted. Its function is as follows. Possesses antifungal activity sensitive to inorganic cations. This is Defensin-like protein 3 (AFP3) from Brassica napus (Rape).